The sequence spans 139 residues: Phosphoribosyl-AMP cyclohydrolase (139 aa).

D91 is a binding site for Mg(2+). C92 contacts Zn(2+). The Mg(2+) site is built by D93 and D95. C110 and C117 together coordinate Zn(2+).

Belongs to the PRA-CH family. As to quaternary structure, homodimer. Mg(2+) is required as a cofactor. It depends on Zn(2+) as a cofactor.

The protein resides in the cytoplasm. The enzyme catalyses 1-(5-phospho-beta-D-ribosyl)-5'-AMP + H2O = 1-(5-phospho-beta-D-ribosyl)-5-[(5-phospho-beta-D-ribosylamino)methylideneamino]imidazole-4-carboxamide. It functions in the pathway amino-acid biosynthesis; L-histidine biosynthesis; L-histidine from 5-phospho-alpha-D-ribose 1-diphosphate: step 3/9. Catalyzes the hydrolysis of the adenine ring of phosphoribosyl-AMP. The protein is Phosphoribosyl-AMP cyclohydrolase of Brucella abortus (strain S19).